Consider the following 324-residue polypeptide: Polyphosphate glucokinase (324 aa).

Positions 53–79 (TSTDATADTPRTSPPSDTAGTTSRHRG) are disordered. Over residues 62-74 (PRTSPPSDTAGTT) the composition is skewed to polar residues. An ATP-binding site is contributed by 83–88 (DIGGSS).

Belongs to the ROK (NagC/XylR) family. In terms of assembly, homodimer.

It catalyses the reaction [phosphate](n) + D-glucose = [phosphate](n-1) + D-glucose 6-phosphate + H(+). It carries out the reaction D-glucose + ATP = D-glucose 6-phosphate + ADP + H(+). Catalyzes the phosphorylation of glucose using polyphosphate or ATP as the phosphoryl donor. The sequence is that of Polyphosphate glucokinase (ppgK) from Mycobacterium leprae (strain TN).